A 114-amino-acid chain; its full sequence is UPF0145 protein SSO1976 (114 aa).

This sequence belongs to the UPF0145 family.

In Saccharolobus solfataricus (strain ATCC 35092 / DSM 1617 / JCM 11322 / P2) (Sulfolobus solfataricus), this protein is UPF0145 protein SSO1976.